The following is a 240-amino-acid chain: Uridylate kinase (240 aa).

ATP is bound at residue 13 to 16; sequence KLSG. Residues 21–26 are involved in allosteric activation by GTP; that stretch reads GDKGFG. Residue glycine 55 participates in UMP binding. The ATP site is built by glycine 56 and arginine 60. UMP is bound by residues aspartate 75 and 136 to 143; that span reads IGNPYFST. ATP contacts are provided by asparagine 164, tyrosine 170, and aspartate 173.

Belongs to the UMP kinase family. As to quaternary structure, homohexamer.

The protein localises to the cytoplasm. It carries out the reaction UMP + ATP = UDP + ADP. Its pathway is pyrimidine metabolism; CTP biosynthesis via de novo pathway; UDP from UMP (UMPK route): step 1/1. With respect to regulation, allosterically activated by GTP. Inhibited by UTP. Catalyzes the reversible phosphorylation of UMP to UDP. This is Uridylate kinase from Staphylococcus epidermidis (strain ATCC 35984 / DSM 28319 / BCRC 17069 / CCUG 31568 / BM 3577 / RP62A).